The sequence spans 391 residues: Tryptophan synthase beta chain (391 aa).

An N6-(pyridoxal phosphate)lysine modification is found at lysine 86.

It belongs to the TrpB family. In terms of assembly, tetramer of two alpha and two beta chains. Requires pyridoxal 5'-phosphate as cofactor.

The enzyme catalyses (1S,2R)-1-C-(indol-3-yl)glycerol 3-phosphate + L-serine = D-glyceraldehyde 3-phosphate + L-tryptophan + H2O. The protein operates within amino-acid biosynthesis; L-tryptophan biosynthesis; L-tryptophan from chorismate: step 5/5. The beta subunit is responsible for the synthesis of L-tryptophan from indole and L-serine. This chain is Tryptophan synthase beta chain, found in Vibrio metschnikovii.